The following is a 36-amino-acid chain: Cecropin-D (36 aa).

A Lysine amide modification is found at lysine 36.

The protein belongs to the cecropin family.

Its subcellular location is the secreted. In terms of biological role, cecropins have lytic and antibacterial activity against several Gram-positive and Gram-negative bacteria. This chain is Cecropin-D, found in Antheraea pernyi (Chinese oak silk moth).